The sequence spans 164 residues: MEMTSTQRLILANQYKLMGLLDSQNAQKYQRLEAIVKGGFALELKELDKEFSDVSEQECQTVLDTLEMYNALQTSYNNLSDKSALTPHRLQFAGYCAVREKKYLNYLRFITGVEGKYQEFMRCEHGCDSQVPMWDKYMRMLDVWHACPHGYHLSMTEIQNILNA.

This sequence belongs to the UPF0304 family.

The polypeptide is UPF0304 protein PM1500 (Pasteurella multocida (strain Pm70)).